We begin with the raw amino-acid sequence, 83 residues long: Exodeoxyribonuclease 7 small subunit (83 aa).

This sequence belongs to the XseB family. In terms of assembly, heterooligomer composed of large and small subunits.

It is found in the cytoplasm. It carries out the reaction Exonucleolytic cleavage in either 5'- to 3'- or 3'- to 5'-direction to yield nucleoside 5'-phosphates.. In terms of biological role, bidirectionally degrades single-stranded DNA into large acid-insoluble oligonucleotides, which are then degraded further into small acid-soluble oligonucleotides. The chain is Exodeoxyribonuclease 7 small subunit from Mesorhizobium japonicum (strain LMG 29417 / CECT 9101 / MAFF 303099) (Mesorhizobium loti (strain MAFF 303099)).